Here is a 320-residue protein sequence, read N- to C-terminus: RNA-binding protein Musashi homolog 1 (320 aa).

A compositionally biased stretch (low complexity) spans 1–14 (MTTTVSTGATAVAT). Positions 1–48 (MTTTVSTGATAVATLRETSPPVDGHEEARLNADSDDGSHGSQDPGKMF) are disordered. Thr18 bears the Phosphothreonine mark. Residues Ser19 and Ser34 each carry the phosphoserine modification. The span at 23–38 (DGHEEARLNADSDDGS) shows a compositional bias: basic and acidic residues. 2 RRM domains span residues 45–124 (GKMF…FPKR) and 134–211 (KKVF…KAQP). 2 required for binding to target mRNAs regions span residues 88-93 (FGFITF) and 177-182 (FGFVTF).

This sequence belongs to the Musashi family. As to expression, expressed in the gut and in AVA, AFD, RMD, RMED, RMEV, RMER and RMEL neurons (at protein level). In the tail expressed in neurons and all the ray sensilla. Expressed in male specific C1-C4 neurons.

Its subcellular location is the cytoplasm. It localises to the perikaryon. RNA binding protein that regulates the expression of target mRNAs at the translation level. Binds RNA containing the 5'-[GA]U(1-3)AGU-3' motif located in the 3' UTR of the target mRNA. Binds to the mRNA of three Arp2/3 complex components arx-1, arx-2 and arx-3 and negatively regulates their translation during association learning. Plays a role in time-dependent memory loss and the retention of conditioned behavior over time, probably through negative regulation of the Arp2/3 actin cytoskeleton branching complex and regulation of synapse size. Required for two aspects of male mating behavior: turning around the hermaphrodite head or tail and vulva location. The protein is RNA-binding protein Musashi homolog 1 of Caenorhabditis elegans.